Reading from the N-terminus, the 523-residue chain is Exodeoxyribonuclease 7 large subunit (523 aa).

The disordered stretch occupies residues 502 to 523 (PGASPAARTRAGKAKADQGSLF).

Belongs to the XseA family. As to quaternary structure, heterooligomer composed of large and small subunits.

The protein resides in the cytoplasm. The enzyme catalyses Exonucleolytic cleavage in either 5'- to 3'- or 3'- to 5'-direction to yield nucleoside 5'-phosphates.. In terms of biological role, bidirectionally degrades single-stranded DNA into large acid-insoluble oligonucleotides, which are then degraded further into small acid-soluble oligonucleotides. The sequence is that of Exodeoxyribonuclease 7 large subunit from Rhodospirillum centenum (strain ATCC 51521 / SW).